The primary structure comprises 521 residues: MSNQLPIHDDLIVYMMQFLDDCSKRKFISTCRFLLELQSRIYYDDEVYVYNEVQHLSYSEFFKRLYYYAGIISSNINFIPQNIEYLQIYRDVSIEDLFEKNAEKLGSIKYLDIDEIDTGKINKLKNNPNSIKTLFVSNEQNILNLLIPSINKLYIHYHSNLDLNLSFSKLTRITFHIGFNKSTDFMFPESLEYLDLGDKFNTPLTPNSLPKNLKHLYLGYKYNYPIENCLPYGLKHLIFGHLFTQKIKNAIPETVTHLCMGGRFYRKVKGYLPKNLIHLEFGWGFNKPLLGEIPNVEYLKTGSSFEYPICDDSNPSKITHLIVGSKINKSDYVLPRNLKTLILDLDYDDPTILFKIPNSVTNLVIVNSTSIDLGSFDLNCYDHVTHLTLNTFVKGSLKYFHNVDTLILDQYFSTSLHNFLPNNLKHLYIENEIYKKQKQFIETNVIIHTFKSSWFSETEDKFLSKFWYGESKYDFIDKIIEYHKKYDNNKFIQKPLVESIIPIKQNSNHDCGLYCPFSKDY.

2 FNIP repeats span residues 179–221 (FNKS…LGYK) and 222–263 (YNYP…MGGR).

The sequence is that of Putative FNIP repeat-containing protein L162 from Acanthamoeba polyphaga mimivirus (APMV).